A 127-amino-acid chain; its full sequence is Small ribosomal subunit protein uS11 (127 aa).

The protein belongs to the universal ribosomal protein uS11 family. Part of the 30S ribosomal subunit. Interacts with proteins S7 and S18. Binds to IF-3.

Located on the platform of the 30S subunit, it bridges several disparate RNA helices of the 16S rRNA. Forms part of the Shine-Dalgarno cleft in the 70S ribosome. The sequence is that of Small ribosomal subunit protein uS11 from Rhodopirellula baltica (strain DSM 10527 / NCIMB 13988 / SH1).